The following is a 627-amino-acid chain: DNA-directed RNA polymerase subunit gamma (627 aa).

Cys70, Cys72, Cys85, and Cys88 together coordinate Zn(2+). The Mg(2+) site is built by Asp468, Asp470, and Asp472.

This sequence belongs to the RNA polymerase beta' chain family. RpoC1 subfamily. In terms of assembly, in cyanobacteria the RNAP catalytic core is composed of 2 alpha, 1 beta, 1 beta', 1 gamma and 1 omega subunit. When a sigma factor is associated with the core the holoenzyme is formed, which can initiate transcription. It depends on Mg(2+) as a cofactor. Zn(2+) is required as a cofactor.

The catalysed reaction is RNA(n) + a ribonucleoside 5'-triphosphate = RNA(n+1) + diphosphate. DNA-dependent RNA polymerase catalyzes the transcription of DNA into RNA using the four ribonucleoside triphosphates as substrates. The sequence is that of DNA-directed RNA polymerase subunit gamma from Synechococcus sp. (strain JA-3-3Ab) (Cyanobacteria bacterium Yellowstone A-Prime).